Reading from the N-terminus, the 211-residue chain is Arginine exporter protein ArgO (211 aa).

A run of 6 helical transmembrane segments spans residues 1–21, 37–57, 68–88, 111–131, 147–167, and 179–199; these read MISYYFQGLALGAAMILPLGP, LMIALLCALSDLVLISAGIFG, LLALVTWGGVAFLLWYGFGAL, IIATMLAVTWLNPHVYLDTFV, WFALGTISASFLWFFGLALLA, and AQRIINILVGVVMWLIAFQLA.

This sequence belongs to the LysE/ArgO transporter (TC 2.A.75) family.

Its subcellular location is the cell inner membrane. The enzyme catalyses L-arginine(in) = L-arginine(out). Functionally, involved in the export of arginine. Important to control the intracellular level of arginine and the correct balance between arginine and lysine. In Salmonella schwarzengrund (strain CVM19633), this protein is Arginine exporter protein ArgO.